The chain runs to 290 residues: 4-hydroxy-3-methylbut-2-enyl diphosphate reductase (290 aa).

A [4Fe-4S] cluster-binding site is contributed by C12. H50 and H83 together coordinate (2E)-4-hydroxy-3-methylbut-2-enyl diphosphate. Dimethylallyl diphosphate is bound by residues H50 and H83. Isopentenyl diphosphate-binding residues include H50 and H83. C105 contributes to the [4Fe-4S] cluster binding site. (2E)-4-hydroxy-3-methylbut-2-enyl diphosphate is bound at residue H133. H133 is a dimethylallyl diphosphate binding site. H133 is an isopentenyl diphosphate binding site. E135 serves as the catalytic Proton donor. T173 is a (2E)-4-hydroxy-3-methylbut-2-enyl diphosphate binding site. Residue C202 coordinates [4Fe-4S] cluster. S230, N232, and S274 together coordinate (2E)-4-hydroxy-3-methylbut-2-enyl diphosphate. Residues S230, N232, and S274 each coordinate dimethylallyl diphosphate. Isopentenyl diphosphate contacts are provided by S230, N232, and S274.

The protein belongs to the IspH family. It depends on [4Fe-4S] cluster as a cofactor.

It carries out the reaction isopentenyl diphosphate + 2 oxidized [2Fe-2S]-[ferredoxin] + H2O = (2E)-4-hydroxy-3-methylbut-2-enyl diphosphate + 2 reduced [2Fe-2S]-[ferredoxin] + 2 H(+). It catalyses the reaction dimethylallyl diphosphate + 2 oxidized [2Fe-2S]-[ferredoxin] + H2O = (2E)-4-hydroxy-3-methylbut-2-enyl diphosphate + 2 reduced [2Fe-2S]-[ferredoxin] + 2 H(+). It participates in isoprenoid biosynthesis; dimethylallyl diphosphate biosynthesis; dimethylallyl diphosphate from (2E)-4-hydroxy-3-methylbutenyl diphosphate: step 1/1. The protein operates within isoprenoid biosynthesis; isopentenyl diphosphate biosynthesis via DXP pathway; isopentenyl diphosphate from 1-deoxy-D-xylulose 5-phosphate: step 6/6. Catalyzes the conversion of 1-hydroxy-2-methyl-2-(E)-butenyl 4-diphosphate (HMBPP) into a mixture of isopentenyl diphosphate (IPP) and dimethylallyl diphosphate (DMAPP). Acts in the terminal step of the DOXP/MEP pathway for isoprenoid precursor biosynthesis. The chain is 4-hydroxy-3-methylbut-2-enyl diphosphate reductase from Nitratidesulfovibrio vulgaris (strain ATCC 29579 / DSM 644 / CCUG 34227 / NCIMB 8303 / VKM B-1760 / Hildenborough) (Desulfovibrio vulgaris).